Reading from the N-terminus, the 795-residue chain is Mitochondrial intermediate peptidase (795 aa).

Residues 1-22 (MLKTLNRRSWTCRQCIRILRRN) constitute a mitochondrion transit peptide. H561 is a Zn(2+) binding site. E562 is a catalytic residue. Residues H565 and H568 each coordinate Zn(2+).

The protein belongs to the peptidase M3 family. It depends on Zn(2+) as a cofactor.

The protein resides in the mitochondrion matrix. The enzyme catalyses Release of an N-terminal octapeptide as second stage of processing of some proteins imported into the mitochondrion.. Cleaves proteins, imported into the mitochondrion, to their mature size. While most mitochondrial precursor proteins are processed to the mature form in one step by mitochondrial processing peptidase (MPP), the sequential cleavage by MIP of an octapeptide after initial processing by MPP is a required step for a subgroup of nuclear-encoded precursor proteins destined for the matrix or the inner membrane. The protein is Mitochondrial intermediate peptidase (OCT1) of Coccidioides immitis (strain RS) (Valley fever fungus).